Consider the following 727-residue polypeptide: Calpain-like protease 1 (727 aa).

The Calpain catalytic domain maps to 70-317 (SRFYPPIPIS…FKQLYLNWNQ (248 aa)). Catalysis depends on residues cysteine 128, histidine 271, and asparagine 296.

This sequence belongs to the peptidase C2 family. PalB/RIM13 subfamily. As to quaternary structure, interacts with SNF7, which may act together with RIM20 as a scaffold to recruit RIM13 to its substrate RIM101.

Its function is as follows. Required for the proteolytic cleavage of the transcriptional repressor RIM101 in response to alkaline ambient pH, which is necessary for sporulation and invasive growth. Probably the protease that cleaves RIM101. This chain is Calpain-like protease 1 (RIM13), found in Saccharomyces cerevisiae (strain ATCC 204508 / S288c) (Baker's yeast).